Reading from the N-terminus, the 225-residue chain is 7-cyano-7-deazaguanine synthase (225 aa).

10 to 20 provides a ligand contact to ATP; sequence VSGGLDSTTAL. Residues cysteine 189, cysteine 199, cysteine 202, and cysteine 205 each coordinate Zn(2+).

It belongs to the QueC family. The cofactor is Zn(2+).

The enzyme catalyses 7-carboxy-7-deazaguanine + NH4(+) + ATP = 7-cyano-7-deazaguanine + ADP + phosphate + H2O + H(+). It participates in purine metabolism; 7-cyano-7-deazaguanine biosynthesis. In terms of biological role, catalyzes the ATP-dependent conversion of 7-carboxy-7-deazaguanine (CDG) to 7-cyano-7-deazaguanine (preQ(0)). The chain is 7-cyano-7-deazaguanine synthase from Saccharophagus degradans (strain 2-40 / ATCC 43961 / DSM 17024).